The following is a 65-amino-acid chain: Large ribosomal subunit protein bL35 (65 aa).

Belongs to the bacterial ribosomal protein bL35 family.

The protein is Large ribosomal subunit protein bL35 of Borrelia duttonii (strain Ly).